Here is a 310-residue protein sequence, read N- to C-terminus: Tagatose-6-phosphate kinase (310 aa).

This sequence belongs to the carbohydrate kinase PfkB family. LacC subfamily.

It catalyses the reaction D-tagatofuranose 6-phosphate + ATP = D-tagatofuranose 1,6-bisphosphate + ADP + H(+). The protein operates within carbohydrate metabolism; D-tagatose 6-phosphate degradation; D-glyceraldehyde 3-phosphate and glycerone phosphate from D-tagatose 6-phosphate: step 1/2. The polypeptide is Tagatose-6-phosphate kinase (Staphylococcus aureus (strain Mu3 / ATCC 700698)).